The following is a 669-amino-acid chain: Carnitine O-palmitoyltransferase 2, mitochondrial (669 aa).

Residues 1–36 (MMAGLLSTQCNSTLSKLKHLSNNPALSVLTSTHRKY) constitute a mitochondrion transit peptide. The Mitochondrial matrix portion of the chain corresponds to 37 to 190 (SSKDGAGSEY…GLLEPEVFHL (154 aa)). Residues 191-220 (NPAKSDTDSFKKLIRWVPPSISWFGAYMVN) constitute an intramembrane region (note=Mitochondrial inner membrane). Residues 221–669 (AYPLDMSQYF…FTVLDGNPIH (449 aa)) are Mitochondrial matrix-facing. The active-site Proton acceptor is His-384. A CoA-binding site is contributed by 464-476 (GKEQLKKKKLSPD). 3 residues coordinate (R)-carnitine: Tyr-498, Ser-500, and Thr-511.

It belongs to the carnitine/choline acetyltransferase family.

It is found in the mitochondrion inner membrane. It catalyses the reaction (R)-carnitine + hexadecanoyl-CoA = O-hexadecanoyl-(R)-carnitine + CoA. It carries out the reaction octanoyl-CoA + (R)-carnitine = O-octanoyl-(R)-carnitine + CoA. The catalysed reaction is decanoyl-CoA + (R)-carnitine = O-decanoyl-(R)-carnitine + CoA. The enzyme catalyses dodecanoyl-CoA + (R)-carnitine = O-dodecanoyl-R-carnitine + CoA. It catalyses the reaction tetradecanoyl-CoA + (R)-carnitine = O-tetradecanoyl-(R)-carnitine + CoA. It carries out the reaction (R)-carnitine + octadecanoyl-CoA = O-octadecanoyl-(R)-carnitine + CoA. The catalysed reaction is eicosanoyl-CoA + (R)-carnitine = O-eicosanoyl-(R)-carnitine + CoA. The enzyme catalyses (9Z)-tetradecenoyl-CoA + (R)-carnitine = O-(9Z)-tetradecenoyl-(R)-carnitine + CoA. It catalyses the reaction (5Z)-tetradecenoyl-CoA + (R)-carnitine = O-(5Z)-tetradecenoyl-(R)-carnitine + CoA. It carries out the reaction (R)-carnitine + (9Z)-octadecenoyl-CoA = O-(9Z)-octadecenoyl-(R)-carnitine + CoA. The catalysed reaction is 4,8-dimethylnonanoyl-CoA + (R)-carnitine = O-4,8-dimethylnonanoyl-(R)-carnitine + CoA. Its pathway is lipid metabolism; fatty acid beta-oxidation. Involved in the intramitochondrial synthesis of acylcarnitines from accumulated acyl-CoA metabolites. Reconverts acylcarnitines back into the respective acyl-CoA esters that can then undergo beta-oxidation, an essential step for the mitochondrial uptake of long-chain fatty acids and their subsequent beta-oxidation in the mitochondrion. Active with medium (C8-C12) and long-chain (C14-C18) acyl-CoA esters. In Danio rerio (Zebrafish), this protein is Carnitine O-palmitoyltransferase 2, mitochondrial (cpt2).